Here is a 514-residue protein sequence, read N- to C-terminus: MYSYEDRLRAVRLYLKLGRRMSATLRQLGYPTKNSLKAWLAEFERNQDLRRGYQRIKRQYTDEQKQRAVDHYIEQGYCLSHTIRSLGYPSREALRAWIRDLRPEFARTVVGSSAPTVARSRLEKQQAVIALNLRVGSAKDVADTVGVSRPTLYNWQHRLLGKVPLKPMTKKKGDTSLEQRHEALLRELAELESQNQRLRMENAILEKASELIKKDMGINPLELTSREKTKVVDALRVTFPLANLLCGLKLARSTYFYQRLRQTRPDKYTQVREVIRTIFEDNYRCYGYRRIDSALRLGGMRVSEKVVRRLMAQERLVVRTPRRRRFSAYAGDPTPAVPNLLNRDFHASAPNTKWLTDLTEIHIPAGKVYVSPIVDCFDGLVVAWNIGTSPDANLVNTMLDHAVRTLRPGEHPVIHSDRGSHYRWPAWIRRTENAQLTRSMSKKGCSPDNAACEGFFGRLKTELIYPRNWQHVTLKDLMTRIDAYIHWYNERRIKVSLGGRSPIEYRHAVGLMSV.

Residues 172–216 (KGDTSLEQRHEALLRELAELESQNQRLRMENAILEKASELIKKDM) adopt a coiled-coil conformation. The Integrase catalytic domain occupies 346–510 (HASAPNTKWL…SPIEYRHAVG (165 aa)). 2 residues coordinate Mg(2+): D357 and D417.

The protein belongs to the transposase 8 family.

Probably involved in the transposition of insertion sequence IS1353. The polypeptide is Probable transposase for insertion sequence element IS1353 (Shigella flexneri).